Consider the following 100-residue polypeptide: Small ribosomal subunit protein uS14 (100 aa).

It belongs to the universal ribosomal protein uS14 family. As to quaternary structure, part of the 30S ribosomal subunit. Contacts proteins S3 and S10.

Its function is as follows. Binds 16S rRNA, required for the assembly of 30S particles and may also be responsible for determining the conformation of the 16S rRNA at the A site. The sequence is that of Small ribosomal subunit protein uS14 from Synechocystis sp. (strain ATCC 27184 / PCC 6803 / Kazusa).